A 237-amino-acid polypeptide reads, in one-letter code: ATP-dependent dethiobiotin synthetase BioD (237 aa).

21–26 (GVGKTV) is a binding site for ATP. Threonine 25 is a Mg(2+) binding site. Lysine 48 is a catalytic residue. Threonine 52 is a binding site for substrate. Residues aspartate 56, 117-120 (EALG), 177-178 (SC), and 209-211 (PYL) each bind ATP. Positions 56 and 117 each coordinate Mg(2+).

It belongs to the dethiobiotin synthetase family. As to quaternary structure, homodimer. It depends on Mg(2+) as a cofactor.

It localises to the cytoplasm. It carries out the reaction (7R,8S)-7,8-diammoniononanoate + CO2 + ATP = (4R,5S)-dethiobiotin + ADP + phosphate + 3 H(+). The catalysed reaction is (7R,8S)-8-amino-7-(carboxyamino)nonanoate + ATP = (4R,5S)-dethiobiotin + ADP + phosphate + H(+). It functions in the pathway cofactor biosynthesis; biotin biosynthesis; biotin from 7,8-diaminononanoate: step 1/2. Catalyzes a mechanistically unusual reaction, the ATP-dependent insertion of CO2 between the N7 and N8 nitrogen atoms of 7,8-diaminopelargonic acid (DAPA, also called 7,8-diammoniononanoate) to form a ureido ring. This cyanobacterium does not encode bioA (which catalyzes the formation of the precursor for this reaction in the cannonical pathway), instead it encodes bioU, which replaces bioA and also performs the first half of the cannonical BioD reaction. Thus in this bacteria BioD has a different substrate. In Synechocystis replacement of bioU by bioA from E.coli leads to biotin synthesis, showing BioD can use the 'cannonical' 7,8-diammoniononanoate as a substrate. The protein is ATP-dependent dethiobiotin synthetase BioD of Synechocystis sp. (strain ATCC 27184 / PCC 6803 / Kazusa).